The following is a 623-amino-acid chain: uncharacterized protein (623 aa).

The next 5 membrane-spanning stretches (helical) occupy residues 242–262 (IALALMILALLLGLRKLITWL), 288–308 (IVSPVSVFLALFSCDVALDIF), 318–338 (VSMWVGAVYIMLLAWLVIALF), 361–381 (VINLILKVVYFLIFIVALLGV), and 387–407 (FNVSAIIASLGIGGLAVALAV).

Belongs to the MscS (TC 1.A.23) family.

It localises to the cell membrane. This is an uncharacterized protein from Helicobacter pylori (strain J99 / ATCC 700824) (Campylobacter pylori J99).